The primary structure comprises 297 residues: Cell death peptidase (297 aa).

The next 2 membrane-spanning stretches (helical) occupy residues Ile-61–Thr-82 and Ile-149–Thr-178.

It belongs to the peptidase U49 family.

Its subcellular location is the cell membrane. Interacts with a short DNA sequence about one-quarter of the way into the major capsid protein gene 23 of T4; general translation inhibition occurs when this late gene of the virus is expressed. In Escherichia coli (strain K12), this protein is Cell death peptidase (lit).